The chain runs to 861 residues: Glucans biosynthesis glucosyltransferase H (861 aa).

6 helical membrane passes run 142-162 (FILL…MKGI), 188-208 (VLPY…FCWV), 516-536 (VFLT…FLVL), 573-593 (LFST…MLIW), 600-620 (FGGV…SVLL), and 683-703 (FLWW…VSVI).

It belongs to the glycosyltransferase 2 family. OpgH subfamily.

It is found in the cell inner membrane. It participates in glycan metabolism; osmoregulated periplasmic glucan (OPG) biosynthesis. In terms of biological role, involved in the biosynthesis of osmoregulated periplasmic glucans (OPGs). The protein is Glucans biosynthesis glucosyltransferase H of Pseudomonas aeruginosa (strain UCBPP-PA14).